The primary structure comprises 344 residues: Dihydroorotase (344 aa).

Zn(2+)-binding residues include histidine 13 and histidine 15. Residues 15-17 (HLR) and asparagine 41 each bind substrate. Zn(2+) contacts are provided by lysine 99, histidine 136, and histidine 174. Lysine 99 bears the N6-carboxylysine mark. Histidine 136 lines the substrate pocket. Leucine 219 is a binding site for substrate. Aspartate 247 contacts Zn(2+). Residue aspartate 247 is part of the active site. 2 residues coordinate substrate: histidine 251 and alanine 263.

Belongs to the metallo-dependent hydrolases superfamily. DHOase family. Class II DHOase subfamily. Homodimer. Zn(2+) serves as cofactor.

The catalysed reaction is (S)-dihydroorotate + H2O = N-carbamoyl-L-aspartate + H(+). The protein operates within pyrimidine metabolism; UMP biosynthesis via de novo pathway; (S)-dihydroorotate from bicarbonate: step 3/3. Functionally, catalyzes the reversible cyclization of carbamoyl aspartate to dihydroorotate. In Shewanella denitrificans (strain OS217 / ATCC BAA-1090 / DSM 15013), this protein is Dihydroorotase.